Consider the following 1035-residue polypeptide: MTMEHGEDCCVKVAVHVRPLIGDEKLQGCKDCVSVVSGKPQVQIGSHSFTFDHVYGSSGTPSAAMFEECVAPLVDGLFQGYNATVLAYGQTGSGKTYTMGTACKEGSHIGIIPRAMATLFDKIDKLKNQVEFQLRVSFIEILKEEVRDLLDPATAAVGKLENGNGHATKLSVPGKPPVQIREASNGVITLAGSTEVHVTTQKEMTACLEQGSLSRATGSTNMNNQSSRSHAIFTITLEQMRKADPIMTLDGMPIEEMNEDYLCAKLHLVDLAGSERAKRTGSDGLRFKEGVHINRGLLALGNVISALGDEKKRKEGAHVPYRDSKLTRLLQDSLGGNSKTVMIACISPADINAEETLNTLKYANRARNIQNKPIVNRNPVADEMKRMRQQIEYLQAELVSARGGVVLDDVQGLRERISMLEQKNEDLCRELYDLRNHGYTDPCEPELQKIGTGYTKGEGLKRSLQSTEPFDVPMTDSVRAGSPKDIDDEVAKEWEHTMLQDSMGKELNELNRQLEQKESEMKMYGSDTVALKQHFGKKLLELEEEKRAVQQERDRLLAEVESLNADGQTHKLRDAQLQKLKTLEAQILDLKKKQENQVQLLKEKQKSDEAAKKLQEEIHSIKAQKVQLQHKIKQEAEQFRQWKATREKELLQLRKEGRRNEYERHKLQALNQRQKLVLQRKTEEAAMATKRLKELLEARKSSGRDNSGMNGTSPGSHMTEKSLQKWLEQDLEVMVHVHEVRNEYEKQSQLRAALGEELAILKQEDVMSGAASPPRGKNGNSRANTLSPNARQARIASLESMVTISSNTLVAMASQLSEAEERERAFSGRGRWNQLRSMAEAKSLLQYIFNVAADARCQVREKEMEIKEMKEQMTELVTILRHSESRRRETEKQLKQREQAAVTATTSPGNGNGSVKHSADDSNTPLSPVAVPAQKQLKYSAGIVNSPSKGVPAFNKQHLKMVPMAQLPVGKKVSIAGQSGKLWRWKRSHHQWLLQFKWKWQKPWKLSEMIRHSDETMTRTRPRPQLLPHRPQRVM.

Residues 10 to 369 (CVKVAVHVRP…LKYANRARNI (360 aa)) form the Kinesin motor domain. 89-96 (GQTGSGKT) is a binding site for ATP. Coiled-coil stretches lie at residues 380 to 437 (VADE…LRNH) and 498 to 702 (MLQD…RKSS). 3 disordered regions span residues 697–720 (EARK…HMTE), 766–787 (VMSG…NTLS), and 882–928 (HSES…PLSP). Polar residues-rich tracts occupy residues 704 to 716 (RDNS…SPGS) and 778 to 787 (NGNSRANTLS). The stretch at 850–904 (NVAADARCQVREKEMEIKEMKEQMTELVTILRHSESRRRETEKQLKQREQAAVTA) forms a coiled coil. Positions 882-898 (HSESRRRETEKQLKQRE) are enriched in basic and acidic residues. Residues 902-926 (VTATTSPGNGNGSVKHSADDSNTPL) show a composition bias toward polar residues. A Nuclear localization signal motif is present at residues 971–987 (KKVSIAGQSGKLWRWKR). The disordered stretch occupies residues 1014–1035 (DETMTRTRPRPQLLPHRPQRVM).

Belongs to the TRAFAC class myosin-kinesin ATPase superfamily. Kinesin family. KIN-4 subfamily. In terms of assembly, homodimer. As to expression, expressed in young tissues with cell divisions, including initiating adventitious roots, primary root tips, flower primordia, intercalary meristems, sub-epidermal regions of young culms and panicles.

The protein localises to the nucleus. It is found in the cytoplasm. It localises to the cytoskeleton. Its activity is regulated as follows. May be regulated by cyclin-dependent kinase A. Its function is as follows. Microtubule-dependent motor protein involved in the control of the oriented deposition of cellulose microfibrils. Involved in wall biogenesis and modification, and contributes to cell-cycle progression and cell division. Acts as a transcriptional activator in gibberellic acid (GA) biosynthesis pathway. Binds specifically to the DNA sequence 5'-ACCAACTTGAA-3' of the ent-kaurene oxidase 2 (CYP701A6 or OsKO2) promoter. May regulate CYP701A6 gene expression and mediates cell elongation by regulating the GA biosynthesis pathway. This chain is Kinesin-like protein KIN-4A, found in Oryza sativa subsp. japonica (Rice).